Here is a 178-residue protein sequence, read N- to C-terminus: MNAERLTRLLEPVVSQVGLELDRVDVVPAGRRRLVRVTIDGDGPDGHGPSLDEISEATAEISHCLDDSGAMGESPYTLEVSSRGVSTPLTQPRHYRRNIGHLVRFTLNPAEEQKSGETFDGRIAEAGEEVVTLEVEAENSKPHKPVYTTREVQLADVAKAVVQVELNRRDAQASKEEN.

This sequence belongs to the RimP family.

It is found in the cytoplasm. Required for maturation of 30S ribosomal subunits. The polypeptide is Ribosome maturation factor RimP (Cutibacterium acnes (strain DSM 16379 / KPA171202) (Propionibacterium acnes)).